Consider the following 122-residue polypeptide: Large ribosomal subunit protein uL14 (122 aa).

It belongs to the universal ribosomal protein uL14 family. Part of the 50S ribosomal subunit. Forms a cluster with proteins L3 and L19. In the 70S ribosome, L14 and L19 interact and together make contacts with the 16S rRNA in bridges B5 and B8.

Functionally, binds to 23S rRNA. Forms part of two intersubunit bridges in the 70S ribosome. The sequence is that of Large ribosomal subunit protein uL14 from Staphylococcus aureus (strain MW2).